The primary structure comprises 109 residues: Nucleoid-associated protein VP2178 (109 aa).

Disordered stretches follow at residues 1–22 (MFGK…ERMQ) and 88–109 (QKEK…KMPF).

It belongs to the YbaB/EbfC family. In terms of assembly, homodimer.

The protein resides in the cytoplasm. Its subcellular location is the nucleoid. Functionally, binds to DNA and alters its conformation. May be involved in regulation of gene expression, nucleoid organization and DNA protection. This is Nucleoid-associated protein VP2178 from Vibrio parahaemolyticus serotype O3:K6 (strain RIMD 2210633).